Reading from the N-terminus, the 661-residue chain is tRNA uridine 5-carboxymethylaminomethyl modification enzyme MnmG (661 aa).

FAD is bound by residues 16–21 (GAGHAG), V128, and S183. The disordered stretch occupies residues 206–230 (PRVNGNTIDYSKTEEEPGDKTPRHF). Residues 216-230 (SKTEEEPGDKTPRHF) are compositionally biased toward basic and acidic residues. 277-291 (GPRYCPSIEDKVVRF) is an NAD(+) binding site. An FAD-binding site is contributed by Q374.

The protein belongs to the MnmG family. Homodimer. Heterotetramer of two MnmE and two MnmG subunits. It depends on FAD as a cofactor.

It is found in the cytoplasm. NAD-binding protein involved in the addition of a carboxymethylaminomethyl (cmnm) group at the wobble position (U34) of certain tRNAs, forming tRNA-cmnm(5)s(2)U34. The protein is tRNA uridine 5-carboxymethylaminomethyl modification enzyme MnmG of Lactobacillus helveticus (strain DPC 4571).